The chain runs to 384 residues: Conidiophore development protein hymA (384 aa).

Residues 362–374 (EPIEPSRSAREPS) are compositionally biased toward basic and acidic residues. Residues 362-384 (EPIEPSRSAREPSRSTANTTTVA) form a disordered region.

The protein belongs to the Mo25 family.

The protein resides in the cytoplasm. Functionally, required for conidiophore development. The sequence is that of Conidiophore development protein hymA (hymA) from Emericella nidulans (strain FGSC A4 / ATCC 38163 / CBS 112.46 / NRRL 194 / M139) (Aspergillus nidulans).